The primary structure comprises 353 residues: Photosystem II protein D1 (353 aa).

Position 2 is an N-acetylthreonine (Thr2). Thr2 carries the post-translational modification Phosphothreonine. Helical transmembrane passes span 29–46 (YIGW…TATS), 118–133 (HFLL…EWEL), and 142–156 (WIAV…AATA). His118 serves as a coordination point for chlorophyll a. A pheophytin a-binding site is contributed by Tyr126. [CaMn4O5] cluster is bound by residues Asp170 and Glu189. A helical transmembrane segment spans residues 197–218 (FHMLGVAGVFGGSLFSAMHGSL). His198 provides a ligand contact to chlorophyll a. Residues His215 and 264–265 (SF) each bind a quinone. Position 215 (His215) interacts with Fe cation. His272 serves as a coordination point for Fe cation. The helical transmembrane segment at 274 to 288 (FLAAWPVVGIWFTAL) threads the bilayer. The [CaMn4O5] cluster site is built by His332, Glu333, Asp342, and Ala344. A propeptide spanning residues 345–353 (AVEAPSING) is cleaved from the precursor.

It belongs to the reaction center PufL/M/PsbA/D family. As to quaternary structure, PSII is composed of 1 copy each of membrane proteins PsbA, PsbB, PsbC, PsbD, PsbE, PsbF, PsbH, PsbI, PsbJ, PsbK, PsbL, PsbM, PsbT, PsbX, PsbY, PsbZ, Psb30/Ycf12, at least 3 peripheral proteins of the oxygen-evolving complex and a large number of cofactors. It forms dimeric complexes. The cofactor is The D1/D2 heterodimer binds P680, chlorophylls that are the primary electron donor of PSII, and subsequent electron acceptors. It shares a non-heme iron and each subunit binds pheophytin, quinone, additional chlorophylls, carotenoids and lipids. D1 provides most of the ligands for the Mn4-Ca-O5 cluster of the oxygen-evolving complex (OEC). There is also a Cl(-1) ion associated with D1 and D2, which is required for oxygen evolution. The PSII complex binds additional chlorophylls, carotenoids and specific lipids.. Tyr-161 forms a radical intermediate that is referred to as redox-active TyrZ, YZ or Y-Z. In terms of processing, C-terminally processed by CTPA; processing is essential to allow assembly of the oxygen-evolving complex and thus photosynthetic growth.

It is found in the plastid. It localises to the chloroplast thylakoid membrane. The enzyme catalyses 2 a plastoquinone + 4 hnu + 2 H2O = 2 a plastoquinol + O2. Its function is as follows. Photosystem II (PSII) is a light-driven water:plastoquinone oxidoreductase that uses light energy to abstract electrons from H(2)O, generating O(2) and a proton gradient subsequently used for ATP formation. It consists of a core antenna complex that captures photons, and an electron transfer chain that converts photonic excitation into a charge separation. The D1/D2 (PsbA/PsbD) reaction center heterodimer binds P680, the primary electron donor of PSII as well as several subsequent electron acceptors. The polypeptide is Photosystem II protein D1 (Medicago sativa (Alfalfa)).